The sequence spans 519 residues: Mannosyl-oligosaccharide alpha-1,2-mannosidase (519 aa).

An N-terminal signal peptide occupies residues 1–22; it reads MKGSPVLAVCAAALTLIPSVVA. The N-linked (GlcNAc...) asparagine glycan is linked to asparagine 187. The cysteines at positions 337 and 366 are disulfide-linked. Catalysis depends on glutamate 380, which acts as the Proton donor. A glycan (N-linked (GlcNAc...) asparagine) is linked at asparagine 443. Threonine 507 lines the Ca(2+) pocket.

It belongs to the glycosyl hydrolase 47 family. As to quaternary structure, monomer. Requires Ca(2+) as cofactor. Mg(2+) is required as a cofactor.

It is found in the secreted. It catalyses the reaction N(4)-(alpha-D-Man-(1-&gt;2)-alpha-D-Man-(1-&gt;2)-alpha-D-Man-(1-&gt;3)-[alpha-D-Man-(1-&gt;2)-alpha-D-Man-(1-&gt;3)-[alpha-D-Man-(1-&gt;2)-alpha-D-Man-(1-&gt;6)]-alpha-D-Man-(1-&gt;6)]-beta-D-Man-(1-&gt;4)-beta-D-GlcNAc-(1-&gt;4)-beta-D-GlcNAc)-L-asparaginyl-[protein] (N-glucan mannose isomer 9A1,2,3B1,2,3) + 4 H2O = N(4)-(alpha-D-Man-(1-&gt;3)-[alpha-D-Man-(1-&gt;3)-[alpha-D-Man-(1-&gt;6)]-alpha-D-Man-(1-&gt;6)]-beta-D-Man-(1-&gt;4)-beta-D-GlcNAc-(1-&gt;4)-beta-D-GlcNAc)-L-asparaginyl-[protein] (N-glucan mannose isomer 5A1,2) + 4 beta-D-mannose. The enzyme catalyses N(4)-(alpha-D-Man-(1-&gt;2)-alpha-D-Man-(1-&gt;2)-alpha-D-Man-(1-&gt;3)-[alpha-D-Man-(1-&gt;3)-[alpha-D-Man-(1-&gt;2)-alpha-D-Man-(1-&gt;6)]-alpha-D-Man-(1-&gt;6)]-beta-D-Man-(1-&gt;4)-beta-D-GlcNAc-(1-&gt;4)-beta-D-GlcNAc)-L-asparaginyl-[protein] (N-glucan mannose isomer 8A1,2,3B1,3) + 3 H2O = N(4)-(alpha-D-Man-(1-&gt;3)-[alpha-D-Man-(1-&gt;3)-[alpha-D-Man-(1-&gt;6)]-alpha-D-Man-(1-&gt;6)]-beta-D-Man-(1-&gt;4)-beta-D-GlcNAc-(1-&gt;4)-beta-D-GlcNAc)-L-asparaginyl-[protein] (N-glucan mannose isomer 5A1,2) + 3 beta-D-mannose. Its pathway is protein modification; protein glycosylation. Its function is as follows. Alpha-mannosidase involved in the maturation of Asn-linked oligosaccharides. Progressively trims alpha-1,2-linked mannose residues from Man(9)GlcNAc(2) to produce Man(5)GlcNAc(2). This is Mannosyl-oligosaccharide alpha-1,2-mannosidase from Coccidioides posadasii (strain RMSCC 757 / Silveira) (Valley fever fungus).